Here is a 452-residue protein sequence, read N- to C-terminus: uncharacterized protein (452 aa).

Residues 1 to 452 (MTAVSSNRNP…LRKPEADTAL (452 aa)) are disordered. Composition is skewed to polar residues over residues 29 to 41 (RTGTPRTTAVSSN), 95 to 111 (SPQTGTPRTTAVSSNRN), 129 to 144 (SPQTGTPGTTAVSSNR), and 163 to 176 (SPQTGTPGTTAVSS). The segment covering 177-193 (NRDHEDDGCLLKQESRG) has biased composition (basic and acidic residues). 7 stretches are compositionally biased toward polar residues: residues 197–212 (SPQTGTPGTTAVSSNR), 231–245 (SPQTGTPGTTAVSSN), 265–280 (SPQTGTPRTTAVSSNR), 299–314 (SPQTGIPRTTAVSSNR), 333–347 (SPQTGTTRTTAVSSK), 376–394 (TAVSSNRDPRTTAVSSNRN), and 412–426 (SPQTGTPGTTAVSSN). A compositionally biased stretch (basic and acidic residues) spans 439–452 (EPQELRKPEADTAL).

This is an uncharacterized protein from Homo sapiens (Human).